Here is a 195-residue protein sequence, read N- to C-terminus: Calcineurin B homologous protein 1 (195 aa).

A lipid anchor (N-myristoyl glycine) is attached at G2. Positions 2-6 (GSRAS) match the Necessary for association with microtubule and interaction with GAPDH motif. EF-hand domains lie at 26–61 (SQIT…AINP), 66–101 (IINA…KSKD), 110–145 (SRSN…MVGV), and 151–186 (QLGS…VDVE). Positions 123, 125, 127, 129, and 134 each coordinate Ca(2+). Positions 138–147 (VLRMMVGVNI) match the Nuclear export signal 1 motif. Ca(2+) contacts are provided by D164, D166, D168, and E175. The Nuclear export signal 2 motif lies at 176 to 185 (FVKVLEKVDV).

It belongs to the calcineurin regulatory subunit family. CHP subfamily. As to quaternary structure, monomer. Interacts with STK17B; the interaction occurs in a calcium-independent manner and induces the translocation of CHP1 from the Golgi to the nucleus. Interacts with GAPDH; the interaction is direct, occurs in a N-myristoylation-dependent manner and facilitates the ability of CHP1 to bind microtubules. Interacts with KIF1B (via the C-terminal end of the kinesin-motor domain); the interaction occurs in a calcium-dependent manner. Associates (via C-terminal domain) with microtubules; the association occurs with polymerized microtubules during the cell cycle in a myristoylation- and calcium-independent manner and is enhanced by GAPDH. Interacts with PPP3CA. Interacts with SLC9A1/NHE1 (via the cytoplasmic C-terminal domain); the interaction occurs at the plasma membrane in a calcium-dependent manner and at a domain that is critical for growth factor stimulation of the exchanger. Interacts with SLC9A3; increases SLC9A3 trafficking and activity at the plasma membrane. Phosphorylated; decreased phosphorylation is associated with an increase in SLC9A1/NHE1 Na(+)/H(+) exchange activity. Phosphorylation occurs in serum-dependent manner. The phosphorylation state may regulate the binding to SLC9A1/NHE1. Post-translationally, both N-myristoylation and calcium-mediated conformational changes are essential for its function in exocytic traffic. N-myristoylation is required for its association with microtubules and interaction with GAPDH, but not for the constitutive association to membranes.

The protein localises to the nucleus. Its subcellular location is the cytoplasm. It localises to the cytoskeleton. It is found in the endomembrane system. The protein resides in the endoplasmic reticulum-Golgi intermediate compartment. The protein localises to the endoplasmic reticulum. Its subcellular location is the cell membrane. It localises to the membrane. Its function is as follows. Calcium-binding protein involved in different processes such as regulation of vesicular trafficking, plasma membrane Na(+)/H(+) exchanger and gene transcription. Involved in the constitutive exocytic membrane traffic. Mediates the association between microtubules and membrane-bound organelles of the endoplasmic reticulum and Golgi apparatus and is also required for the targeting and fusion of transcytotic vesicles (TCV) with the plasma membrane. Functions as an integral cofactor in cell pH regulation by controlling plasma membrane-type Na(+)/H(+) exchange activity. Affects the pH sensitivity of SLC9A1/NHE1 by increasing its sensitivity at acidic pH. Required for the stabilization and localization of SLC9A1/NHE1 at the plasma membrane. Inhibits serum- and GTPase-stimulated Na(+)/H(+) exchange. Plays a role as an inhibitor of ribosomal RNA transcription by repressing the nucleolar UBF1 transcriptional activity. May sequester UBF1 in the nucleoplasm and limit its translocation to the nucleolus. Associates to the ribosomal gene promoter. Acts as a negative regulator of the calcineurin/NFAT signaling pathway. Inhibits NFAT nuclear translocation and transcriptional activity by suppressing the calcium-dependent calcineurin phosphatase activity. Also negatively regulates the kinase activity of the apoptosis-induced kinase STK17B. Inhibits both STK17B auto- and substrate-phosphorylations in a calcium-dependent manner. This is Calcineurin B homologous protein 1 (CHP1) from Bos taurus (Bovine).